The chain runs to 426 residues: Enolase (426 aa).

Gln163 is a (2R)-2-phosphoglycerate binding site. The Proton donor role is filled by Glu205. Mg(2+) contacts are provided by Asp242, Glu285, and Asp312. Positions 337, 366, 367, and 388 each coordinate (2R)-2-phosphoglycerate. Lys337 functions as the Proton acceptor in the catalytic mechanism.

The protein belongs to the enolase family. In terms of assembly, component of the RNA degradosome, a multiprotein complex involved in RNA processing and mRNA degradation. The cofactor is Mg(2+).

The protein resides in the cytoplasm. It is found in the secreted. It localises to the cell surface. The catalysed reaction is (2R)-2-phosphoglycerate = phosphoenolpyruvate + H2O. The protein operates within carbohydrate degradation; glycolysis; pyruvate from D-glyceraldehyde 3-phosphate: step 4/5. Catalyzes the reversible conversion of 2-phosphoglycerate (2-PG) into phosphoenolpyruvate (PEP). It is essential for the degradation of carbohydrates via glycolysis. The polypeptide is Enolase (Nitrosococcus oceani (strain ATCC 19707 / BCRC 17464 / JCM 30415 / NCIMB 11848 / C-107)).